Reading from the N-terminus, the 43-residue chain is Metallothionein B (43 aa).

The beta stretch occupies residues 1-16 (SCAGSCKCKNCRCRSC). A divalent metal cation is bound by residues cysteine 2, cysteine 6, cysteine 8, cysteine 11, cysteine 13, cysteine 16, cysteine 20, cysteine 21, cysteine 23, cysteine 24, cysteine 28, cysteine 31, cysteine 35, and cysteine 37. An alpha region spans residues 17 to 43 (RKSCCSCCPAGCNNCVKGCVCKEPASS).

It belongs to the metallothionein superfamily. Type 1 family.

Its function is as follows. Metallothioneins have a high content of cysteine residues that bind various heavy metals. This chain is Metallothionein B, found in Colinus virginianus (Northern bobwhite).